The following is a 474-amino-acid chain: ATP synthase subunit beta (474 aa).

Residue 153-160 (GGAGVGKT) coordinates ATP.

The protein belongs to the ATPase alpha/beta chains family. F-type ATPases have 2 components, CF(1) - the catalytic core - and CF(0) - the membrane proton channel. CF(1) has five subunits: alpha(3), beta(3), gamma(1), delta(1), epsilon(1). CF(0) has three main subunits: a(1), b(2) and c(9-12). The alpha and beta chains form an alternating ring which encloses part of the gamma chain. CF(1) is attached to CF(0) by a central stalk formed by the gamma and epsilon chains, while a peripheral stalk is formed by the delta and b chains.

It is found in the cell inner membrane. The catalysed reaction is ATP + H2O + 4 H(+)(in) = ADP + phosphate + 5 H(+)(out). In terms of biological role, produces ATP from ADP in the presence of a proton gradient across the membrane. The catalytic sites are hosted primarily by the beta subunits. This Neorickettsia sennetsu (strain ATCC VR-367 / Miyayama) (Ehrlichia sennetsu) protein is ATP synthase subunit beta.